Reading from the N-terminus, the 373-residue chain is sn-glycerol-3-phosphate import ATP-binding protein UgpC (373 aa).

Residues 4–235 form the ABC transporter domain; sequence LTLSNITKSY…PASVFVATFI (232 aa). 37 to 44 is an ATP binding site; the sequence is GPSGCGKS.

This sequence belongs to the ABC transporter superfamily. sn-glycerol-3-phosphate importer (TC 3.A.1.1.3) family. In terms of assembly, the complex is composed of two ATP-binding proteins (UgpC), two transmembrane proteins (UgpA and UgpE) and a solute-binding protein (UgpB).

Its subcellular location is the cell inner membrane. The enzyme catalyses sn-glycerol 3-phosphate(out) + ATP + H2O = sn-glycerol 3-phosphate(in) + ADP + phosphate + H(+). Functionally, part of the ABC transporter complex UgpBAEC involved in sn-glycerol-3-phosphate (G3P) import. Responsible for energy coupling to the transport system. This chain is sn-glycerol-3-phosphate import ATP-binding protein UgpC, found in Psychromonas ingrahamii (strain DSM 17664 / CCUG 51855 / 37).